Here is an 893-residue protein sequence, read N- to C-terminus: Translation initiation factor IF-2 (893 aa).

Disordered stretches follow at residues 135–169 (KAKA…KAEE) and 201–300 (ENEK…ESMD). Over residues 201-224 (ENEKRWAEEEKARKEAEKTVDHHV) the composition is skewed to basic and acidic residues. Low complexity predominate over residues 251–265 (PSANAGNNANANAGA). Positions 393 to 562 (SRAPVVTIMG…LLEAEVLELK (170 aa)) constitute a tr-type G domain. Positions 402–409 (GHVDHGKT) are G1. GTP is bound at residue 402 to 409 (GHVDHGKT). Residues 427–431 (GITQH) are G2. The segment at 448–451 (DTPG) is G3. Residues 448-452 (DTPGH) and 502-505 (NKMD) contribute to the GTP site. Residues 502 to 505 (NKMD) form a G4 region. Positions 538–540 (SAK) are G5.

It belongs to the TRAFAC class translation factor GTPase superfamily. Classic translation factor GTPase family. IF-2 subfamily.

It is found in the cytoplasm. Its function is as follows. One of the essential components for the initiation of protein synthesis. Protects formylmethionyl-tRNA from spontaneous hydrolysis and promotes its binding to the 30S ribosomal subunits. Also involved in the hydrolysis of GTP during the formation of the 70S ribosomal complex. The polypeptide is Translation initiation factor IF-2 (Shewanella halifaxensis (strain HAW-EB4)).